The primary structure comprises 283 residues: Syntaxin VAM3 (283 aa).

The disordered stretch occupies residues 1 to 26; the sequence is MSFFDIEAQSSKGNSQQEPQFSTNQK. The Cytoplasmic portion of the chain corresponds to 1–261; that stretch reads MSFFDIEAQS…ADQHQRDRNK (261 aa). Positions 8–25 are enriched in polar residues; it reads AQSSKGNSQQEPQFSTNQ. Coiled coils occupy residues 28 to 48 and 84 to 111; these read KELS…EKEC and LIHQ…SYNQ. 2 disordered regions span residues 116–146 and 162–182; these read FPLK…DPES and NEGQ…QGLS. A compositionally biased stretch (basic and acidic residues) spans 127–144; it reads SKERKDIHPRTEAVRQDP. Residues 169–189 adopt a coiled-coil conformation; that stretch reads QLQEEQEQQQQGLSQEELDFQ. In terms of domain architecture, t-SNARE coiled-coil homology spans 190 to 252; that stretch reads TIIHQERSQQ…QNANKQLTRA (63 aa). Residues 262–282 form a helical; Anchor for type IV membrane protein membrane-spanning segment; sequence CGKVTLIIIIVVCMVVLLAVL. Position 283 (S283) is a topological domain, vacuolar.

This sequence belongs to the syntaxin family. Associates with VAM7.

The protein localises to the vacuole membrane. Its function is as follows. Required for vacuolar assembly. Provides the t-SNARE function in a late step of the vacuolar assembly. Required for homotypic vacuole membrane fusion, autophagy and fusion of biosynthetic transport vesicles with the vacuole. Required for the delivery of alpha-factor receptor-ligand complexes to the vacuole. The sequence is that of Syntaxin VAM3 (VAM3) from Saccharomyces cerevisiae (strain ATCC 204508 / S288c) (Baker's yeast).